We begin with the raw amino-acid sequence, 81 residues long: Photosystem I iron-sulfur center (81 aa).

4Fe-4S ferredoxin-type domains are found at residues S2 to W31 and I39 to Y68. Positions 11, 14, 17, 21, 48, 51, 54, and 58 each coordinate [4Fe-4S] cluster.

As to quaternary structure, the eukaryotic PSI reaction center is composed of at least 11 subunits. Requires [4Fe-4S] cluster as cofactor.

Its subcellular location is the plastid. The protein localises to the chloroplast thylakoid membrane. The enzyme catalyses reduced [plastocyanin] + hnu + oxidized [2Fe-2S]-[ferredoxin] = oxidized [plastocyanin] + reduced [2Fe-2S]-[ferredoxin]. In terms of biological role, apoprotein for the two 4Fe-4S centers FA and FB of photosystem I (PSI); essential for photochemical activity. FB is the terminal electron acceptor of PSI, donating electrons to ferredoxin. The C-terminus interacts with PsaA/B/D and helps assemble the protein into the PSI complex. Required for binding of PsaD and PsaE to PSI. PSI is a plastocyanin/cytochrome c6-ferredoxin oxidoreductase, converting photonic excitation into a charge separation, which transfers an electron from the donor P700 chlorophyll pair to the spectroscopically characterized acceptors A0, A1, FX, FA and FB in turn. The polypeptide is Photosystem I iron-sulfur center (Nephroselmis olivacea (Green alga)).